The following is a 248-amino-acid chain: 2,3-bisphosphoglycerate-dependent phosphoglycerate mutase (248 aa).

Substrate is bound by residues 8-15 (RHGESTWN), 21-22 (TG), Arg60, 87-90 (ERHY), Lys98, 114-115 (RR), and 183-184 (GN). The active-site Tele-phosphohistidine intermediate is His9. Glu87 (proton donor/acceptor) is an active-site residue.

It belongs to the phosphoglycerate mutase family. BPG-dependent PGAM subfamily. Homodimer.

It carries out the reaction (2R)-2-phosphoglycerate = (2R)-3-phosphoglycerate. It functions in the pathway carbohydrate degradation; glycolysis; pyruvate from D-glyceraldehyde 3-phosphate: step 3/5. Catalyzes the interconversion of 2-phosphoglycerate and 3-phosphoglycerate. The protein is 2,3-bisphosphoglycerate-dependent phosphoglycerate mutase of Burkholderia lata (strain ATCC 17760 / DSM 23089 / LMG 22485 / NCIMB 9086 / R18194 / 383).